Reading from the N-terminus, the 110-residue chain is UPF0060 membrane protein MT2717 (110 aa).

The next 4 helical transmembrane spans lie at 6-26, 32-52, 61-81, and 90-110; these read ILLF…VWQG, GWLW…FATL, VLAA…MALD, and VIGA…PRGH.

This sequence belongs to the UPF0060 family.

Its subcellular location is the cell membrane. The sequence is that of UPF0060 membrane protein MT2717 from Mycobacterium tuberculosis (strain CDC 1551 / Oshkosh).